The primary structure comprises 213 residues: MADTAHQCTIVGIAGASASGKSLIASTLYRELRAQVGDHNIGVIPEDCYYRDQSDLTMEERYKVNYDHPNSMDHALLYQHLCELKAGNAIELPQYDYVAHTRKSETIHFKPKKVIIIEGILLLTDKRLREEMDFSIFVDTPLDICLMRRIKRDVNERGRSLDSVIEQYNKTVRPMFFQFIEPSKQYADIIVPRGGKNRVAIDILKAKIGQFCE.

15–22 serves as a coordination point for ATP; that stretch reads GASASGKS.

This sequence belongs to the uridine kinase family.

The protein resides in the cytoplasm. The catalysed reaction is uridine + ATP = UMP + ADP + H(+). The enzyme catalyses cytidine + ATP = CMP + ADP + H(+). It participates in pyrimidine metabolism; CTP biosynthesis via salvage pathway; CTP from cytidine: step 1/3. Its pathway is pyrimidine metabolism; UMP biosynthesis via salvage pathway; UMP from uridine: step 1/1. This is Uridine kinase from Proteus mirabilis (strain HI4320).